The chain runs to 825 residues: MTKKQENETSKELGMDNKKTSGKSGKLKISVSAIRKGEKKTEGKRSNARRRANNHSNDHSKRRRPAAQDLLKDLKQKQRADEARLDQESKAAKQEYKKSLNKAEASESKPVVKKVESVEKPAETAAEAPKVRGPKILKPSPARLKQNQANSEKPAAKPSSSRRPSSRPSFTEAPMPENKEGRRRKSGKPGRKGQNSYADQGRGANSNRSEQRKRKNKKHQSAPQVKKQVTQRKDRPLPESFEYEVGMNAQDLGKILHREPAEIVKKLFMLGIMINQNRSLDKDTIELLAADYGIEAVEKVHEDISDIDNIFAQEMEESKNSENQVVRPPVVTIMGHVDHGKTTLLDRLRHTRVSEHEAGGITQNIGAYQVRINDRLITFLDTPGHAAFSSMRARGAEITDIVVLIVAADDGVMPQTIEAIDHAKSAGVPIIVAINKMDRPGANPAHVTEQLMQYELIPENYGGSTIFVNISAKTGMGIDELLENIILEADMLELKADPKQKAIGTVVEARLSRGKGPVADVLIQQGTLRVGDPIVVGDTFGRVRTMTNDKGHQVKKATPSMPVEITGLNDVPESADKLVVFADEKTARAVGEARAQQSLQKQRENVQHVTLDNLFDTMKRESMKSVDIVLKADVQGSAEALAQSFQKIDVEGVRVNIIHSGVGAINESDVTLASASNALIIGFNVRPTATAKSQAAQEGVDIRLYSIIYKAIDDVKAAMQGMLEPTYEEKVIGNLTVRETWKVSKIGTIAGAFVDNGYVTRESGIRVIRDGVVKYDGKVASLRRFKDDVKEVKAGFDCGLTIENFNDIKEGDELEAYEMQEVKPG.

Composition is skewed to basic and acidic residues over residues 1–19 (MTKK…DNKK), 35–45 (RKGEKKTEGKR), 70–98 (LLKD…EYKK), and 113–122 (KKVESVEKPA). Residues 1-239 (MTKKQENETS…TQRKDRPLPE (239 aa)) are disordered. The span at 158–169 (PSSSRRPSSRPS) shows a compositional bias: low complexity. The segment covering 181–191 (GRRRKSGKPGR) has biased composition (basic residues). The span at 194–208 (QNSYADQGRGANSNR) shows a compositional bias: polar residues. Residues 211 to 220 (QRKRKNKKHQ) show a composition bias toward basic residues. The 170-residue stretch at 326–495 (VRPPVVTIMG…ILEADMLELK (170 aa)) folds into the tr-type G domain. The tract at residues 335–342 (GHVDHGKT) is G1. 335–342 (GHVDHGKT) contributes to the GTP binding site. The tract at residues 360-364 (GITQN) is G2. The segment at 381–384 (DTPG) is G3. GTP is bound by residues 381–385 (DTPGH) and 435–438 (NKMD). The tract at residues 435–438 (NKMD) is G4. The tract at residues 471–473 (SAK) is G5.

The protein belongs to the TRAFAC class translation factor GTPase superfamily. Classic translation factor GTPase family. IF-2 subfamily.

The protein resides in the cytoplasm. One of the essential components for the initiation of protein synthesis. Protects formylmethionyl-tRNA from spontaneous hydrolysis and promotes its binding to the 30S ribosomal subunits. Also involved in the hydrolysis of GTP during the formation of the 70S ribosomal complex. In Lactobacillus delbrueckii subsp. bulgaricus (strain ATCC BAA-365 / Lb-18), this protein is Translation initiation factor IF-2.